Here is a 163-residue protein sequence, read N- to C-terminus: Glutathione peroxidase 1 (163 aa).

The active site involves Cys-36.

Belongs to the glutathione peroxidase family.

Its subcellular location is the cytoplasm. The enzyme catalyses 2 glutathione + H2O2 = glutathione disulfide + 2 H2O. In terms of biological role, may constitute a glutathione peroxidase-like protective system against oxidative stresses. The sequence is that of Glutathione peroxidase 1 (gpx-1) from Caenorhabditis elegans.